The sequence spans 354 residues: Peptide chain release factor 1 (354 aa).

Glutamine 230 is modified (N5-methylglutamine).

This sequence belongs to the prokaryotic/mitochondrial release factor family. In terms of processing, methylated by PrmC. Methylation increases the termination efficiency of RF1.

Its subcellular location is the cytoplasm. Its function is as follows. Peptide chain release factor 1 directs the termination of translation in response to the peptide chain termination codons UAG and UAA. The protein is Peptide chain release factor 1 of Thermus thermophilus (strain ATCC BAA-163 / DSM 7039 / HB27).